The sequence spans 279 residues: Large ribosomal subunit protein uL2 (279 aa).

Residues 218–279 (RPQTRGSAMN…ITRRKSNPKR (62 aa)) form a disordered region. Residues 255–279 (KGSKTRRKKASDKLIITRRKSNPKR) show a composition bias toward basic residues.

It belongs to the universal ribosomal protein uL2 family. In terms of assembly, part of the 50S ribosomal subunit. Forms a bridge to the 30S subunit in the 70S ribosome.

Functionally, one of the primary rRNA binding proteins. Required for association of the 30S and 50S subunits to form the 70S ribosome, for tRNA binding and peptide bond formation. It has been suggested to have peptidyltransferase activity; this is somewhat controversial. Makes several contacts with the 16S rRNA in the 70S ribosome. This chain is Large ribosomal subunit protein uL2, found in Sulfurimonas denitrificans (strain ATCC 33889 / DSM 1251) (Thiomicrospira denitrificans (strain ATCC 33889 / DSM 1251)).